Reading from the N-terminus, the 232-residue chain is Ribonuclease 3 (232 aa).

One can recognise an RNase III domain in the interval 7–136 (AALLEDTIDY…LLGAVFCDGG (130 aa)). Mg(2+) is bound at residue Glu49. Residue Asp53 is part of the active site. Residues Asn122 and Glu125 each coordinate Mg(2+). Glu125 is a catalytic residue. The region spanning 163 to 232 (DYKTRLQERL…AKQALEYLEE (70 aa)) is the DRBM domain.

The protein belongs to the ribonuclease III family. Homodimer. Mg(2+) serves as cofactor.

The protein localises to the cytoplasm. The enzyme catalyses Endonucleolytic cleavage to 5'-phosphomonoester.. Its function is as follows. Digests double-stranded RNA. Involved in the processing of primary rRNA transcript to yield the immediate precursors to the large and small rRNAs (23S and 16S). Processes some mRNAs, and tRNAs when they are encoded in the rRNA operon. Processes pre-crRNA and tracrRNA of type II CRISPR loci if present in the organism. In Syntrophotalea carbinolica (strain DSM 2380 / NBRC 103641 / GraBd1) (Pelobacter carbinolicus), this protein is Ribonuclease 3.